Here is a 293-residue protein sequence, read N- to C-terminus: Amine sulfotransferase (293 aa).

3'-phosphoadenylyl sulfate is bound at residue 46-51 (KSGTIW). H101 acts as the Proton acceptor in catalysis. 3'-phosphoadenylyl sulfate is bound by residues R123, S131, 220 to 225 (ATFQKM), and 252 to 254 (RKG).

It belongs to the sulfotransferase 1 family.

Its subcellular location is the cytoplasm. It carries out the reaction a primary amine + 3'-phosphoadenylyl sulfate = a sulfamate + adenosine 3',5'-bisphosphate + 2 H(+). Functionally, sulfotransferase that utilizes 3'-phospho-5'-adenylyl sulfate (PAPS) as sulfonate donor to catalyze the N-sulfonation of amines. The sequence is that of Amine sulfotransferase (Sult3a1) from Mus musculus (Mouse).